The chain runs to 437 residues: MNLAWNKILEEVSKKISPQYYERFIDTLKLETLNSEKCTIIAPSATIKTHVERKYQSIIENAILEACGDKIPVEILIETKATSPLQSFLEKSFDQKDFQFNPDYTFETFIVGDCNRLAYTAAKECVRKPAEINPLYLFGSVGVGKTHLLHAIGSELIKKDPWKTVCYIDISSFMNEFRFALQSRELIESFKIKYQSYNCLLVDDIQLLSTNAEKTQDEFFALFNFLFERKRQIVIASDRPSSELTIHERLKSRFVTGVQADIQYPNKEIRKGIVTSHSKIMDLGLSEDVLEFLADQIEEDTRLLLGALNDIYLYKKSYSLLFLNLDKVKEIVKNRLYRKKNVEFSHDRIIESVAKEFNLDAAEIMGKSRKKELIIPRHICFYLLHNVFNVNKSQVGRLFQTQHTTVIHGLRKTEELLSDNKEIRFLVERISSKYKLQ.

The domain I, interacts with DnaA modulators stretch occupies residues 1-74; that stretch reads MNLAWNKILE…EACGDKIPVE (74 aa). Residues 74–98 are domain II; the sequence is EILIETKATSPLQSFLEKSFDQKDF. Residues 99–315 form a domain III, AAA+ region region; sequence QFNPDYTFET…GALNDIYLYK (217 aa). The ATP site is built by Gly142, Gly144, Lys145, and Thr146. A domain IV, binds dsDNA region spans residues 316 to 437; the sequence is KSYSLLFLNL…ERISSKYKLQ (122 aa).

Belongs to the DnaA family. Oligomerizes as a right-handed, spiral filament on DNA at oriC.

It is found in the cytoplasm. In terms of biological role, plays an essential role in the initiation and regulation of chromosomal replication. ATP-DnaA binds to the origin of replication (oriC) to initiate formation of the DNA replication initiation complex once per cell cycle. Binds the DnaA box (a 9 base pair repeat at the origin) and separates the double-stranded (ds)DNA. Forms a right-handed helical filament on oriC DNA; dsDNA binds to the exterior of the filament while single-stranded (ss)DNA is stabiized in the filament's interior. The ATP-DnaA-oriC complex binds and stabilizes one strand of the AT-rich DNA unwinding element (DUE), permitting loading of DNA polymerase. After initiation quickly degrades to an ADP-DnaA complex that is not apt for DNA replication. Binds acidic phospholipids. The protein is Chromosomal replication initiator protein DnaA of Leptospira borgpetersenii serovar Hardjo-bovis (strain JB197).